Consider the following 356-residue polypeptide: uncharacterized protein (356 aa).

6 consecutive transmembrane segments (helical) span residues phenylalanine 2–leucine 22, glutamate 35–phenylalanine 55, asparagine 76–glycine 96, isoleucine 99–leucine 119, isoleucine 124–leucine 144, and valine 151–phenylalanine 171. Residues glutamine 218–isoleucine 353 form the GGDEF domain.

Its subcellular location is the cell membrane. This is an uncharacterized protein from Staphylococcus epidermidis (strain ATCC 35984 / DSM 28319 / BCRC 17069 / CCUG 31568 / BM 3577 / RP62A).